Reading from the N-terminus, the 235-residue chain is MLDREGFRPNVGIILINARNEVFWGKRIGEHSWQFPQGGIKYGETPEQAMFRELHEEVGLLPEHVRIVGRTRDWLRYEVPDKFIRREIRGHYRGQKQIWFLLRMVGRDCDIQLRATEHPEFDAWRWSQYWVPLEAVIEFKREVYQLALSELSRFVQRQTRAPLSPYGRGGQHRERDGRDARDSRERSSDQGGRNEQHAQPALTVTTTTVIVETVSVSAPTPSSPNPDDTAPKDNS.

The 144-residue stretch at 6–149 (GFRPNVGIIL…KREVYQLALS (144 aa)) folds into the Nudix hydrolase domain. Positions 38–59 (GGIKYGETPEQAMFRELHEEVG) match the Nudix box motif. The segment at 161-235 (APLSPYGRGG…PDDTAPKDNS (75 aa)) is disordered. Over residues 171 to 196 (QHRERDGRDARDSRERSSDQGGRNEQ) the composition is skewed to basic and acidic residues. A compositionally biased stretch (low complexity) spans 203 to 220 (TVTTTTVIVETVSVSAPT).

The protein belongs to the Nudix hydrolase family. RppH subfamily. It depends on a divalent metal cation as a cofactor.

In terms of biological role, accelerates the degradation of transcripts by removing pyrophosphate from the 5'-end of triphosphorylated RNA, leading to a more labile monophosphorylated state that can stimulate subsequent ribonuclease cleavage. This Ralstonia pickettii (strain 12J) protein is RNA pyrophosphohydrolase.